We begin with the raw amino-acid sequence, 230 residues long: Ribonuclease 3 (230 aa).

The 130-residue stretch at 5–134 folds into the RNase III domain; the sequence is NDTISKVINY…LIGAIYIDGG (130 aa). Glu47 lines the Mg(2+) pocket. Asp51 is a catalytic residue. The Mg(2+) site is built by Asn120 and Glu123. Glu123 is an active-site residue. One can recognise a DRBM domain in the interval 159 to 228; it reads DPKTSLQEWT…AELILEKIKK (70 aa).

It belongs to the ribonuclease III family. Homodimer. Mg(2+) is required as a cofactor.

Its subcellular location is the cytoplasm. It carries out the reaction Endonucleolytic cleavage to 5'-phosphomonoester.. Functionally, digests double-stranded RNA. Involved in the processing of primary rRNA transcript to yield the immediate precursors to the large and small rRNAs (23S and 16S). Processes some mRNAs, and tRNAs when they are encoded in the rRNA operon. Processes pre-crRNA and tracrRNA of type II CRISPR loci if present in the organism. This is Ribonuclease 3 from Wolbachia pipientis subsp. Culex pipiens (strain wPip).